The sequence spans 111 residues: Universal stress protein B (111 aa).

A run of 2 helical transmembrane segments spans residues 1-21 (MISTVALFWALCVVCVINMAR) and 90-110 (FILTSALCGLVMVSLVGLILW).

This sequence belongs to the universal stress protein B family.

The protein resides in the cell inner membrane. The chain is Universal stress protein B from Yersinia enterocolitica serotype O:8 / biotype 1B (strain NCTC 13174 / 8081).